The following is a 154-amino-acid chain: 6,7-dimethyl-8-ribityllumazine synthase (154 aa).

Residues F23, 57–59 (AFE), and 81–83 (AVI) each bind 5-amino-6-(D-ribitylamino)uracil. Residue 86 to 87 (AT) coordinates (2S)-2-hydroxy-3-oxobutyl phosphate. H89 acts as the Proton donor in catalysis. F114 serves as a coordination point for 5-amino-6-(D-ribitylamino)uracil. R128 serves as a coordination point for (2S)-2-hydroxy-3-oxobutyl phosphate.

This sequence belongs to the DMRL synthase family.

It carries out the reaction (2S)-2-hydroxy-3-oxobutyl phosphate + 5-amino-6-(D-ribitylamino)uracil = 6,7-dimethyl-8-(1-D-ribityl)lumazine + phosphate + 2 H2O + H(+). It functions in the pathway cofactor biosynthesis; riboflavin biosynthesis; riboflavin from 2-hydroxy-3-oxobutyl phosphate and 5-amino-6-(D-ribitylamino)uracil: step 1/2. Catalyzes the formation of 6,7-dimethyl-8-ribityllumazine by condensation of 5-amino-6-(D-ribitylamino)uracil with 3,4-dihydroxy-2-butanone 4-phosphate. This is the penultimate step in the biosynthesis of riboflavin. In Syntrophus aciditrophicus (strain SB), this protein is 6,7-dimethyl-8-ribityllumazine synthase.